The following is a 663-amino-acid chain: Probable serine/threonine-protein kinase DDB_G0283301 (663 aa).

The Protein kinase domain maps to 312-586; it reads IERRNELGRG…EECVERLITL (275 aa). ATP contacts are provided by residues 318-326 and lysine 348; that span reads LGRGGNGTV. Aspartate 440 serves as the catalytic Proton acceptor.

The protein belongs to the protein kinase superfamily. Ser/Thr protein kinase family.

The enzyme catalyses L-seryl-[protein] + ATP = O-phospho-L-seryl-[protein] + ADP + H(+). The catalysed reaction is L-threonyl-[protein] + ATP = O-phospho-L-threonyl-[protein] + ADP + H(+). The chain is Probable serine/threonine-protein kinase DDB_G0283301 from Dictyostelium discoideum (Social amoeba).